A 1073-amino-acid polypeptide reads, in one-letter code: DNA-directed RNA polymerase subunit beta (1073 aa).

Belongs to the RNA polymerase beta chain family. As to quaternary structure, in plastids the minimal PEP RNA polymerase catalytic core is composed of four subunits: alpha, beta, beta', and beta''. When a (nuclear-encoded) sigma factor is associated with the core the holoenzyme is formed, which can initiate transcription.

It localises to the plastid. It is found in the chloroplast. The enzyme catalyses RNA(n) + a ribonucleoside 5'-triphosphate = RNA(n+1) + diphosphate. In terms of biological role, DNA-dependent RNA polymerase catalyzes the transcription of DNA into RNA using the four ribonucleoside triphosphates as substrates. The protein is DNA-directed RNA polymerase subunit beta of Aethionema grandiflorum (Persian stone-cress).